The following is a 131-amino-acid chain: UPF0102 protein AZC_4471 (131 aa).

The protein belongs to the UPF0102 family.

The polypeptide is UPF0102 protein AZC_4471 (Azorhizobium caulinodans (strain ATCC 43989 / DSM 5975 / JCM 20966 / LMG 6465 / NBRC 14845 / NCIMB 13405 / ORS 571)).